We begin with the raw amino-acid sequence, 246 residues long: Probable chemoreceptor glutamine deamidase CheD (246 aa).

A disordered region spans residues 225–246; it reads GAGVQPAVQKAASPYAANLSRK.

It belongs to the CheD family.

The catalysed reaction is L-glutaminyl-[protein] + H2O = L-glutamyl-[protein] + NH4(+). Probably deamidates glutamine residues to glutamate on methyl-accepting chemotaxis receptors (MCPs), playing an important role in chemotaxis. The sequence is that of Probable chemoreceptor glutamine deamidase CheD from Burkholderia vietnamiensis (strain G4 / LMG 22486) (Burkholderia cepacia (strain R1808)).